The primary structure comprises 211 residues: Small ribosomal subunit protein uS3 (211 aa).

Residues L38 to K106 form the KH type-2 domain.

The protein belongs to the universal ribosomal protein uS3 family. As to quaternary structure, part of the 30S ribosomal subunit. Forms a tight complex with proteins S10 and S14.

Functionally, binds the lower part of the 30S subunit head. Binds mRNA in the 70S ribosome, positioning it for translation. In Anaplasma phagocytophilum (strain HZ), this protein is Small ribosomal subunit protein uS3.